An 868-amino-acid polypeptide reads, in one-letter code: DNA mismatch repair protein MutS (868 aa).

620-627 (GPNMGGKS) lines the ATP pocket.

This sequence belongs to the DNA mismatch repair MutS family.

In terms of biological role, this protein is involved in the repair of mismatches in DNA. It is possible that it carries out the mismatch recognition step. This protein has a weak ATPase activity. The chain is DNA mismatch repair protein MutS from Desulforamulus reducens (strain ATCC BAA-1160 / DSM 100696 / MI-1) (Desulfotomaculum reducens).